Reading from the N-terminus, the 469-residue chain is Serine hydroxymethyltransferase, cytosolic (469 aa).

Thr20 carries the post-translational modification Phosphothreonine. The residue at position 26 (Ser26) is a Phosphoserine. At Lys248 the chain carries N6-(pyridoxal phosphate)lysine. The residue at position 429 (Ser429) is a Phosphoserine. Residue Lys456 forms a Glycyl lysine isopeptide (Lys-Gly) (interchain with G-Cter in ubiquitin) linkage.

Belongs to the SHMT family. As to quaternary structure, homotetramer. Pyridoxal 5'-phosphate serves as cofactor.

It localises to the cytoplasm. The enzyme catalyses (6R)-5,10-methylene-5,6,7,8-tetrahydrofolate + glycine + H2O = (6S)-5,6,7,8-tetrahydrofolate + L-serine. It participates in one-carbon metabolism; tetrahydrofolate interconversion. Functionally, interconversion of serine and glycine. The sequence is that of Serine hydroxymethyltransferase, cytosolic from Saccharomyces cerevisiae (strain ATCC 204508 / S288c) (Baker's yeast).